The chain runs to 438 residues: Polycomb protein eed-B (438 aa).

Residues 1–70 (MSEASGRAAG…GRKGWGKGKW (70 aa)) form a disordered region. Polar residues predominate over residues 40-57 (SIESGTNTERPDTPTNAA). WD repeat units follow at residues 88–131 (DHNQ…DIRL), 139–182 (DADE…CIKH), 185–225 (GHGN…LVAI), 231–270 (GHRD…MKTA), 301–338 (IHRN…DDIE), 356–396 (SQCD…PHKA), and 405–438 (KCAS…DRLR).

The protein belongs to the WD repeat ESC family. Component of the prc2/eed-ezh2 complex. Can interact with ezh2, hdac1 and taf9. Interacts with yy1.

The protein localises to the nucleus. Polycomb group (PcG) protein. Component of the prc2/eed-ezh2 complex, which methylates 'Lys-9' and 'Lys-27' of histone H3, leading to transcriptional repression of the affected target gene. May play a role in neural induction. This Xenopus laevis (African clawed frog) protein is Polycomb protein eed-B (eed-b).